Here is a 524-residue protein sequence, read N- to C-terminus: Ribonuclease Y (524 aa).

A helical transmembrane segment spans residues 2-22 (GIVINLFLIIAASIVFFVVGF). Positions 214–299 (ALSVVHIQSD…KAYQDAKKEI (86 aa)) constitute a KH domain. An HD domain is found at 340–432 (LLQHSREVAM…VDAANIVSLS (93 aa)).

Belongs to the RNase Y family.

It localises to the cell membrane. Functionally, endoribonuclease that initiates mRNA decay. The protein is Ribonuclease Y of Chlorobaculum tepidum (strain ATCC 49652 / DSM 12025 / NBRC 103806 / TLS) (Chlorobium tepidum).